Here is a 702-residue protein sequence, read N- to C-terminus: Polyphosphate kinase (702 aa).

Asn-55 lines the ATP pocket. Residues Arg-389 and Arg-419 each coordinate Mg(2+). Residue His-449 is the Phosphohistidine intermediate of the active site. 3 residues coordinate ATP: Tyr-482, Arg-578, and His-606.

Belongs to the polyphosphate kinase 1 (PPK1) family. The cofactor is Mg(2+). An intermediate of this reaction is the autophosphorylated ppk in which a phosphate is covalently linked to a histidine residue through a N-P bond.

The catalysed reaction is [phosphate](n) + ATP = [phosphate](n+1) + ADP. Catalyzes the reversible transfer of the terminal phosphate of ATP to form a long-chain polyphosphate (polyP). The sequence is that of Polyphosphate kinase from Bacillus cereus (strain ATCC 14579 / DSM 31 / CCUG 7414 / JCM 2152 / NBRC 15305 / NCIMB 9373 / NCTC 2599 / NRRL B-3711).